The chain runs to 86 residues: Small ribosomal subunit protein bS20 (86 aa).

The tract at residues 1–22 (MANIASARKRARQAEKNRQHNM) is disordered.

This sequence belongs to the bacterial ribosomal protein bS20 family.

Binds directly to 16S ribosomal RNA. The sequence is that of Small ribosomal subunit protein bS20 from Thioalkalivibrio sulfidiphilus (strain HL-EbGR7).